A 297-amino-acid polypeptide reads, in one-letter code: Bifunctional protein FolD (297 aa).

Residues 168–170, threonine 195, and valine 236 each bind NADP(+); that span reads GRG.

The protein belongs to the tetrahydrofolate dehydrogenase/cyclohydrolase family. Homodimer.

It carries out the reaction (6R)-5,10-methylene-5,6,7,8-tetrahydrofolate + NADP(+) = (6R)-5,10-methenyltetrahydrofolate + NADPH. The catalysed reaction is (6R)-5,10-methenyltetrahydrofolate + H2O = (6R)-10-formyltetrahydrofolate + H(+). It participates in one-carbon metabolism; tetrahydrofolate interconversion. In terms of biological role, catalyzes the oxidation of 5,10-methylenetetrahydrofolate to 5,10-methenyltetrahydrofolate and then the hydrolysis of 5,10-methenyltetrahydrofolate to 10-formyltetrahydrofolate. The protein is Bifunctional protein FolD of Bifidobacterium animalis subsp. lactis (strain AD011).